A 222-amino-acid polypeptide reads, in one-letter code: Probable transcriptional regulator ycf29 (222 aa).

Positions 4 to 120 constitute a Response regulatory domain; sequence KLMLVENDIV…ELLSIINNLI (117 aa). At Asp53 the chain carries 4-aspartylphosphate. Residues 139-204 form the HTH luxR-type domain; it reads QLNHKIRLTP…LLVKYSINNN (66 aa). Residues 163–182 constitute a DNA-binding region (H-T-H motif); the sequence is NKEISTILNTSVRNVEKYVS.

The protein resides in the plastid. It localises to the chloroplast. The chain is Probable transcriptional regulator ycf29 (ycf29) from Pyropia yezoensis (Susabi-nori).